The primary structure comprises 729 residues: Alpha-galactosidase AgaA (729 aa).

Substrate is bound by residues D53, W199, 366 to 367, R443, 476 to 480, C526, and D548; these read DD and KWDMN. D478 (nucleophile) is an active-site residue. D548 acts as the Proton donor in catalysis.

This sequence belongs to the glycosyl hydrolase 36 family. As to quaternary structure, homotetramer.

The catalysed reaction is Hydrolysis of terminal, non-reducing alpha-D-galactose residues in alpha-D-galactosides, including galactose oligosaccharides, galactomannans and galactolipids.. Its activity is regulated as follows. Not inhibited by D-galactose or sucrose. Inhibited by pharmaceutical drug 1-deoxygalactonojirimycin. Hydrolyzes the short-chain alpha-galactosaccharides raffinose and stachyose. This Geobacillus stearothermophilus (Bacillus stearothermophilus) protein is Alpha-galactosidase AgaA.